The following is a 365-amino-acid chain: Ribosomal RNA large subunit methyltransferase M (365 aa).

Residues serine 193, 226–229 (CPGG), aspartate 245, aspartate 265, and aspartate 282 each bind S-adenosyl-L-methionine. Residue lysine 311 is the Proton acceptor of the active site.

The protein belongs to the class I-like SAM-binding methyltransferase superfamily. RNA methyltransferase RlmE family. RlmM subfamily. In terms of assembly, monomer.

The protein localises to the cytoplasm. The catalysed reaction is cytidine(2498) in 23S rRNA + S-adenosyl-L-methionine = 2'-O-methylcytidine(2498) in 23S rRNA + S-adenosyl-L-homocysteine + H(+). Its function is as follows. Catalyzes the 2'-O-methylation at nucleotide C2498 in 23S rRNA. The polypeptide is Ribosomal RNA large subunit methyltransferase M (Alteromonas mediterranea (strain DSM 17117 / CIP 110805 / LMG 28347 / Deep ecotype)).